We begin with the raw amino-acid sequence, 545 residues long: Cannabidiolic acid synthase-like 2 (545 aa).

The N-terminal stretch at 1-28 (MKCSTFCFWYVCKIIFFFLSFNIQISIA) is a signal peptide. An intrachain disulfide couples C37 to C99. N-linked (GlcNAc...) asparagine glycosylation is found at N45, N65, N89, and N168. Residues 77 to 251 (TTPKPLVITT…AAWKIRLVAV (175 aa)) form the FAD-binding PCMH-type domain. The 6-(S-cysteinyl)-8alpha-(pros-histidyl)-FAD (His-Cys) cross-link spans 114 to 176 (HDAEGMSYIS…ENLSFPAGYC (63 aa)). Substrate is bound at residue H292. 4 N-linked (GlcNAc...) asparagine glycosylation sites follow: N297, N305, N329, and N361. Position 417 (Y417) interacts with substrate. N467 carries an N-linked (GlcNAc...) asparagine glycan. The active-site Proton acceptor is Y484. A glycan (N-linked (GlcNAc...) asparagine) is linked at N499.

This sequence belongs to the oxygen-dependent FAD-linked oxidoreductase family. Requires FAD as cofactor. In terms of processing, the FAD cofactor is bound via a bicovalent 6-S-cysteinyl, 8alpha-N1-histidyl FAD linkage.

It is found in the secreted. Has no cannabidiolic acid synthase activity. The protein is Cannabidiolic acid synthase-like 2 (CBDAS3) of Cannabis sativa (Hemp).